We begin with the raw amino-acid sequence, 169 residues long: Lipoprotein signal peptidase (169 aa).

4 consecutive transmembrane segments (helical) span residues 4–24, 29–49, 70–90, and 101–121; these read PICS…ILDI, WVMA…FNLT, WFFA…MYRS, and YALI…HGAV. Active-site residues include aspartate 123 and aspartate 141. Residues 137–157 form a helical membrane-spanning segment; it reads FNLADVAISIGAVLVIFEGFL.

It belongs to the peptidase A8 family.

It localises to the cell inner membrane. The catalysed reaction is Release of signal peptides from bacterial membrane prolipoproteins. Hydrolyzes -Xaa-Yaa-Zaa-|-(S,diacylglyceryl)Cys-, in which Xaa is hydrophobic (preferably Leu), and Yaa (Ala or Ser) and Zaa (Gly or Ala) have small, neutral side chains.. Its pathway is protein modification; lipoprotein biosynthesis (signal peptide cleavage). This protein specifically catalyzes the removal of signal peptides from prolipoproteins. The chain is Lipoprotein signal peptidase from Yersinia pseudotuberculosis serotype O:1b (strain IP 31758).